The following is a 427-amino-acid chain: Enolase (427 aa).

Residue glutamine 162 coordinates (2R)-2-phosphoglycerate. Glutamate 204 serves as the catalytic Proton donor. Mg(2+)-binding residues include aspartate 241, glutamate 284, and aspartate 311. The (2R)-2-phosphoglycerate site is built by lysine 336, arginine 365, serine 366, and lysine 387. Lysine 336 acts as the Proton acceptor in catalysis.

The protein belongs to the enolase family. Requires Mg(2+) as cofactor.

It localises to the cytoplasm. The protein localises to the secreted. It is found in the cell surface. It catalyses the reaction (2R)-2-phosphoglycerate = phosphoenolpyruvate + H2O. It participates in carbohydrate degradation; glycolysis; pyruvate from D-glyceraldehyde 3-phosphate: step 4/5. Its function is as follows. Catalyzes the reversible conversion of 2-phosphoglycerate (2-PG) into phosphoenolpyruvate (PEP). It is essential for the degradation of carbohydrates via glycolysis. This is Enolase from Corynebacterium kroppenstedtii (strain DSM 44385 / JCM 11950 / CIP 105744 / CCUG 35717).